A 250-amino-acid polypeptide reads, in one-letter code: Triosephosphate isomerase, glycosomal (250 aa).

N11 and K13 together coordinate substrate. The Electrophile role is filled by H95. Residue E167 is the Proton acceptor of the active site.

The protein belongs to the triosephosphate isomerase family. Homodimer.

Its subcellular location is the glycosome. It catalyses the reaction D-glyceraldehyde 3-phosphate = dihydroxyacetone phosphate. Its pathway is carbohydrate biosynthesis; gluconeogenesis. It functions in the pathway carbohydrate degradation; glycolysis; D-glyceraldehyde 3-phosphate from glycerone phosphate: step 1/1. In Trypanosoma brucei brucei, this protein is Triosephosphate isomerase, glycosomal.